A 554-amino-acid polypeptide reads, in one-letter code: Glucose-6-phosphate isomerase (554 aa).

The active-site Proton donor is the glutamate 359. Residues histidine 390 and lysine 518 contribute to the active site.

Belongs to the GPI family.

Its subcellular location is the cytoplasm. The enzyme catalyses alpha-D-glucose 6-phosphate = beta-D-fructose 6-phosphate. It functions in the pathway carbohydrate biosynthesis; gluconeogenesis. Its pathway is carbohydrate degradation; glycolysis; D-glyceraldehyde 3-phosphate and glycerone phosphate from D-glucose: step 2/4. Functionally, catalyzes the reversible isomerization of glucose-6-phosphate to fructose-6-phosphate. This is Glucose-6-phosphate isomerase from Pseudomonas putida (strain W619).